A 486-amino-acid chain; its full sequence is 2-hydroxymuconic semialdehyde dehydrogenase (486 aa).

Catalysis depends on residues Glu-254 and Cys-288.

Belongs to the aldehyde dehydrogenase family. As to quaternary structure, homodimer.

It carries out the reaction (2Z,4E)-2-hydroxy-6-oxohexa-2,4-dienoate + NAD(+) + H2O = (2Z,4E)-2-hydroxyhexa-2,4-dienedioate + NADH + 2 H(+). Its pathway is aromatic compound metabolism; benzoate degradation via hydroxylation. In terms of biological role, 2-hydroxymuconic acid semialdehyde can be converted to 2-hydroxypent-2,4-dienoate either directly by the action of 2-hydroxymuconic semialdehyde hydrolase (HMSH) or by the action of three sequential enzymes, the first of which is HMSD. Can oxidize not only 2-hydroxymuconic semialdehyde and its analogs but also benzaldehyde and its analogs. The protein is 2-hydroxymuconic semialdehyde dehydrogenase (xylG) of Pseudomonas putida (Arthrobacter siderocapsulatus).